The sequence spans 460 residues: Spermatogenesis-defective protein 39 homolog (460 aa).

At T21 the chain carries Phosphothreonine. Residues 70 to 101 are disordered; it reads SIKETAGSSGSTSEGREQMKGRNSFYTQLPKP. A compositionally biased stretch (low complexity) spans 73–82; it reads ETAGSSGSTS. The residue at position 115 (T115) is a Phosphothreonine. Residues S119, S122, and S128 each carry the phosphoserine modification. Positions 121–133 are enriched in polar residues; that stretch reads QSLSDALSDTPAK. The segment at 121-141 is disordered; the sequence is QSLSDALSDTPAKTYSPELGR. A Phosphothreonine modification is found at T130.

This sequence belongs to the SPE39 family. As to quaternary structure, interacts with VPS33B. Associates with the homotypic fusion and vacuole protein sorting (HOPS) complex; impaired by VPS33B. Interacts with RAB11A.

It localises to the cytoplasm. Its subcellular location is the cytoplasmic vesicle. It is found in the early endosome. The protein resides in the recycling endosome. The protein localises to the late endosome. Its function is as follows. Proposed to be involved in endosomal maturation implicating in part VPS33B. In epithelial cells, the VPS33B:VIPAS39 complex may play a role in the apical RAB11A-dependent recycling pathway and in the maintenance of the apical-basolateral polarity. May play a role in lysosomal trafficking, probably via association with the core HOPS complex in a discrete population of endosomes; the functions seems to be independent of VPS33B. May play a role in vesicular trafficking during spermatogenesis. May be involved in direct or indirect transcriptional regulation of E-cadherin. This chain is Spermatogenesis-defective protein 39 homolog (Vipas39), found in Rattus norvegicus (Rat).